Here is a 209-residue protein sequence, read N- to C-terminus: MTKGILGRKVGMTQVFTENGELIPVTVIEAAQNVVLQKKTVETDGYEAVQIGFEDKRAKLSNKPEQGHVAKADTTPKRFIREFRDVNLDEYEIGAEVKVDVFAEGDIIDATGVSKGKGFQGVIKRHGQSRGPMAHGSRYHRRPGSMGPVAPNRVFKNKLLPGRMGGEQITIQNLEIVKVDVEKNVLLVKGNVPGAKKALVQIKTATKAK.

Residues 126 to 148 (HGQSRGPMAHGSRYHRRPGSMGP) are disordered.

Belongs to the universal ribosomal protein uL3 family. Part of the 50S ribosomal subunit. Forms a cluster with proteins L14 and L19.

In terms of biological role, one of the primary rRNA binding proteins, it binds directly near the 3'-end of the 23S rRNA, where it nucleates assembly of the 50S subunit. The sequence is that of Large ribosomal subunit protein uL3 from Listeria innocua serovar 6a (strain ATCC BAA-680 / CLIP 11262).